The sequence spans 122 residues: MQVLQIVKEKAKMRQNMNFFETTIYEKYDLRDKIKPGQKFVVRQGDLIIVNYDIENPQKRGLRFARIIADRENGSVIEYFRNSHVILSGEGFTSIFHPEHGLVILPVTRDDLTFYTIDNSKD.

This is an uncharacterized protein from Acidianus sp. F28 (AFV-2).